We begin with the raw amino-acid sequence, 569 residues long: Sulfite reductase [NADPH] hemoprotein beta-component (569 aa).

The [4Fe-4S] cluster site is built by Cys-434, Cys-440, Cys-479, and Cys-483. A siroheme-binding site is contributed by Cys-483.

It belongs to the nitrite and sulfite reductase 4Fe-4S domain family. Alpha(8)-beta(8). The alpha component is a flavoprotein, the beta component is a hemoprotein. The cofactor is siroheme. [4Fe-4S] cluster serves as cofactor.

It carries out the reaction hydrogen sulfide + 3 NADP(+) + 3 H2O = sulfite + 3 NADPH + 4 H(+). Its pathway is sulfur metabolism; hydrogen sulfide biosynthesis; hydrogen sulfide from sulfite (NADPH route): step 1/1. Functionally, component of the sulfite reductase complex that catalyzes the 6-electron reduction of sulfite to sulfide. This is one of several activities required for the biosynthesis of L-cysteine from sulfate. The protein is Sulfite reductase [NADPH] hemoprotein beta-component of Staphylococcus carnosus (strain TM300).